A 228-amino-acid chain; its full sequence is DOPA 4,5-dioxygenase (228 aa).

In terms of assembly, homodimer. In terms of tissue distribution, expressed at high level in coloured cap tissue and at least 10 times lower level in the stipe.

The protein resides in the cytoplasm. The protein operates within pigment biosynthesis; betalain biosynthesis. In terms of biological role, extradiol dioxygenase that opens up the cyclic ring of DOPA between carbons 4 and 5 thus producing an unstable seco-DOPA that rearranges non-enzymatically to betalamic acid. Can also catalyze the formation of muscaflavin (a pigment found in the hygrocybe mushrooms family and of some amanita species only) by a 2,3-extradiol cleavage of DOPA. The sequence is that of DOPA 4,5-dioxygenase (DODA) from Amanita muscaria (Fly agaric).